Consider the following 600-residue polypeptide: DNA primase (600 aa).

A CHC2-type zinc finger spans residues 38-62; that stretch reads CPFHDEKTPSFIVYPTRGHYHCYGC. Residues 253–333 form the Toprim domain; it reads KRVILVEGQA…GIAVIVCRLP (81 aa). Residues Glu-259, Asp-304, and Asp-306 each coordinate Mg(2+).

The protein belongs to the DnaG primase family. As to quaternary structure, monomer. Interacts with DnaB. It depends on Zn(2+) as a cofactor. Requires Mg(2+) as cofactor.

It carries out the reaction ssDNA + n NTP = ssDNA/pppN(pN)n-1 hybrid + (n-1) diphosphate.. RNA polymerase that catalyzes the synthesis of short RNA molecules used as primers for DNA polymerase during DNA replication. In Chlamydia muridarum (strain MoPn / Nigg), this protein is DNA primase.